A 176-amino-acid polypeptide reads, in one-letter code: Cytidylate kinase (176 aa).

An ATP-binding site is contributed by 7–15 (GPPGSGTTS).

The protein belongs to the cytidylate kinase family. Type 2 subfamily.

It is found in the cytoplasm. It carries out the reaction CMP + ATP = CDP + ADP. The enzyme catalyses dCMP + ATP = dCDP + ADP. The polypeptide is Cytidylate kinase (Methanosphaerula palustris (strain ATCC BAA-1556 / DSM 19958 / E1-9c)).